The following is a 140-amino-acid chain: Ribosome-binding factor A (140 aa).

Residues 115–140 (EDERQQRGDIPPGSDQQPGSDEQPTG) are disordered. Residues 128–140 (SDQQPGSDEQPTG) show a composition bias toward polar residues.

This sequence belongs to the RbfA family. Monomer. Binds 30S ribosomal subunits, but not 50S ribosomal subunits or 70S ribosomes.

The protein resides in the cytoplasm. Its function is as follows. One of several proteins that assist in the late maturation steps of the functional core of the 30S ribosomal subunit. Associates with free 30S ribosomal subunits (but not with 30S subunits that are part of 70S ribosomes or polysomes). Required for efficient processing of 16S rRNA. May interact with the 5'-terminal helix region of 16S rRNA. This chain is Ribosome-binding factor A, found in Synechococcus sp. (strain CC9605).